The primary structure comprises 232 residues: Orotate phosphoribosyltransferase (232 aa).

Residues Arg-107, Lys-108, Lys-111, and 133–141 each bind 5-phospho-alpha-D-ribose 1-diphosphate; that span reads EDLTTDGGS. Residue Thr-137 coordinates orotate.

This sequence belongs to the purine/pyrimidine phosphoribosyltransferase family. PyrE subfamily. Homodimer. It depends on Mg(2+) as a cofactor.

The catalysed reaction is orotidine 5'-phosphate + diphosphate = orotate + 5-phospho-alpha-D-ribose 1-diphosphate. It participates in pyrimidine metabolism; UMP biosynthesis via de novo pathway; UMP from orotate: step 1/2. Its function is as follows. Catalyzes the transfer of a ribosyl phosphate group from 5-phosphoribose 1-diphosphate to orotate, leading to the formation of orotidine monophosphate (OMP). The protein is Orotate phosphoribosyltransferase of Cereibacter sphaeroides (strain KD131 / KCTC 12085) (Rhodobacter sphaeroides).